The following is a 362-amino-acid chain: Microfibril-associated glycoprotein 3 (362 aa).

The first 19 residues, 1–19, serve as a signal peptide directing secretion; it reads MKLHCCLFTLVASIIVPAA. Over 20-146 the chain is Extracellular; that stretch reads FVLEDVDFNQ…TLRVIFTSGD (127 aa). Residues asparagine 36, asparagine 41, and asparagine 110 are each glycosylated (N-linked (GlcNAc...) asparagine). The 93-residue stretch at 45-137 folds into the Ig-like C2-type domain; that stretch reads PSSFELSASS…SPIRASYSVT (93 aa). A disulfide bridge connects residues cysteine 73 and cysteine 124. A helical membrane pass occupies residues 147–167; sequence MSVYYMIVCLIAFTITLILNV. At 168–362 the chain is on the cytoplasmic side; sequence TRLCMMSSHL…KDGAYENSQL (195 aa). Disordered stretches follow at residues 282–306 and 319–362; these read GIYVINPEMGRSNSPGGDSDDGSLN and HLQS…NSQL. The span at 319–337 shows a compositional bias: polar residues; the sequence is HLQSETKSIDTESQGSSHF.

Post-translationally, glycosylated.

The protein localises to the cell membrane. In terms of biological role, component of the elastin-associated microfibrils. This is Microfibril-associated glycoprotein 3 (MFAP3) from Pongo abelii (Sumatran orangutan).